A 319-amino-acid chain; its full sequence is tRNA pseudouridine synthase B (319 aa).

The active-site Nucleophile is aspartate 49.

The protein belongs to the pseudouridine synthase TruB family. Type 1 subfamily.

The enzyme catalyses uridine(55) in tRNA = pseudouridine(55) in tRNA. Functionally, responsible for synthesis of pseudouridine from uracil-55 in the psi GC loop of transfer RNAs. This chain is tRNA pseudouridine synthase B, found in Aeromonas salmonicida (strain A449).